Reading from the N-terminus, the 595-residue chain is DNA primase (595 aa).

The CHC2-type zinc-finger motif lies at 38–62 (CPFHDEKTPSFIVYPTRGHYHCYGC). In terms of domain architecture, Toprim spans 251–331 (RRVILVEGQA…GITAIVCRLP (81 aa)). Mg(2+)-binding residues include Glu257, Asp302, and Asp304. Residues 430-441 (KGKKVSAKEPSS) are compositionally biased toward basic and acidic residues. Residues 430-451 (KGKKVSAKEPSSESKQTSTEGK) form a disordered region.

This sequence belongs to the DnaG primase family. As to quaternary structure, monomer. Interacts with DnaB. It depends on Zn(2+) as a cofactor. Mg(2+) is required as a cofactor.

The catalysed reaction is ssDNA + n NTP = ssDNA/pppN(pN)n-1 hybrid + (n-1) diphosphate.. Functionally, RNA polymerase that catalyzes the synthesis of short RNA molecules used as primers for DNA polymerase during DNA replication. This Chlamydia trachomatis serovar D (strain ATCC VR-885 / DSM 19411 / UW-3/Cx) protein is DNA primase.